The following is an 833-amino-acid chain: CUB domain-containing protein 1 (833 aa).

An N-terminal signal peptide occupies residues 1-29; that stretch reads MAHSACGFSVALLGALLLGTARLLRGTEA. The Extracellular segment spans residues 30–666; the sequence is SEIALPQRSG…VTLTPRTVDL (637 aa). 7 N-linked (GlcNAc...) asparagine glycosylation sites follow: N122, N180, N205, N270, N310, N342, and N386. Positions 417 to 540 constitute a CUB domain; sequence CLDHRYCYRQ…QGLIVSYTPY (124 aa). An intrachain disulfide couples C476 to C499. A helical membrane pass occupies residues 667–687; sequence AVVIGAAGGGALLLFALVLII. At 688–833 the chain is on the cytoplasmic side; it reads CFVKKKKKVD…HTQGPVETEE (146 aa). Y731 carries the phosphotyrosine modification. Residues 783–833 form a disordered region; that stretch reads AKFTAEELAPSSPPESESEPYTFSHPNKGEIGVRETDIPLLHTQGPVETEE. Basic and acidic residues predominate over residues 809–819; that stretch reads NKGEIGVRETD.

In terms of assembly, interacts with CDH2/N-cadherin, CDH3/P-cadherin, SDC1/syndecan-1, SDC4/syndecan-4 and the serine protease ST14/MT-SP1. Also interacts SRC and PRKCG/protein kinase C gamma. In terms of processing, phosphorylated on tyrosine by kinases of the SRC family such as SRC and YES as well as by the protein kinase C gamma/PRKCG. Dephosphorylated by phosphotyrosine phosphatases. Also phosphorylated by suramin, a heparin analog. Tyrosine phosphorylated in response to dissociation of integrin alpha-6 beta-4 from laminin-5. N-glycosylated. Post-translationally, a soluble form may also be produced by proteolytic cleavage at the cell surface (shedding). Another peptide of 80 kDa (p80) is present in cultured keratinocytes probably due to tryptic cleavage at an unidentified site on the N-terminal side. Converted to p80 by plasmin, a trypsin-like protease.

It is found in the cell membrane. Its function is as follows. May be involved in cell adhesion and cell matrix association. May play a role in the regulation of anchorage versus migration or proliferation versus differentiation via its phosphorylation. May be a novel marker for leukemia diagnosis and for immature hematopoietic stem cell subsets. Belongs to the tetraspanin web involved in tumor progression and metastasis. The sequence is that of CUB domain-containing protein 1 (Cdcp1) from Mus musculus (Mouse).